A 425-amino-acid polypeptide reads, in one-letter code: Monoacylglycerol lipase ABHD2 (425 aa).

Residues 1-9 lie on the Cytoplasmic side of the membrane; sequence MNAMLETPE. A helical; Signal-anchor for type II membrane protein transmembrane segment spans residues 10–30; the sequence is LPAVFDGVKLAAVAAVLYVIV. Over 31–425 the chain is Extracellular; sequence RCLNLKSPTA…DTEQVEADLE (395 aa). Residues 128–382 form the AB hydrolase-1 domain; it reads MVICPGIANH…HGGHLGFFEG (255 aa). Asn136 carries an N-linked (GlcNAc...) asparagine glycan. Catalysis depends on Ser207, which acts as the Nucleophile. Residues Asp345 and His376 each act as charge relay system in the active site.

The protein belongs to the AB hydrolase superfamily. AB hydrolase 4 family. In terms of tissue distribution, present in sperm (at protein level).

The protein localises to the cell projection. Its subcellular location is the cilium. The protein resides in the flagellum membrane. It is found in the cell membrane. The enzyme catalyses an acetyl ester + H2O = an aliphatic alcohol + acetate + H(+). The catalysed reaction is Hydrolyzes glycerol monoesters of long-chain fatty acids.. It carries out the reaction a triacylglycerol + H2O = a diacylglycerol + a fatty acid + H(+). It catalyses the reaction 2-(5Z,8Z,11Z,14Z-eicosatetraenoyl)-glycerol + H2O = glycerol + (5Z,8Z,11Z,14Z)-eicosatetraenoate + H(+). The enzyme catalyses a butanoate ester + H2O = an aliphatic alcohol + butanoate + H(+). The catalysed reaction is hexadecanoate ester + H2O = an aliphatic alcohol + hexadecanoate + H(+). Acylglycerol lipase activity is activated upon binding to progesterone. Progesterone-dependent acylglycerol lipase that catalyzes hydrolysis of endocannabinoid arachidonoylglycerol (AG) from cell membrane. Acts as a progesterone receptor: progesterone-binding activates the acylglycerol lipase activity, mediating degradation of 1-arachidonoylglycerol (1AG) and 2-arachidonoylglycerol (2AG) to glycerol and arachidonic acid (AA). Also displays an ester hydrolase activity against acetyl ester, butanoate ester and hexadecanoate ester. Plays a key role in sperm capacitation in response to progesterone by mediating degradation of 2AG, an inhibitor of the sperm calcium channel CatSper, leading to calcium influx via CatSper and sperm activation. May also play a role in smooth muscle cells migration. In Homo sapiens (Human), this protein is Monoacylglycerol lipase ABHD2.